Here is a 241-residue protein sequence, read N- to C-terminus: 1-(5-phosphoribosyl)-5-[(5-phosphoribosylamino)methylideneamino] imidazole-4-carboxamide isomerase (241 aa).

D8 serves as the catalytic Proton acceptor. Residue D129 is the Proton donor of the active site.

It belongs to the HisA/HisF family.

It is found in the cytoplasm. The catalysed reaction is 1-(5-phospho-beta-D-ribosyl)-5-[(5-phospho-beta-D-ribosylamino)methylideneamino]imidazole-4-carboxamide = 5-[(5-phospho-1-deoxy-D-ribulos-1-ylimino)methylamino]-1-(5-phospho-beta-D-ribosyl)imidazole-4-carboxamide. Its pathway is amino-acid biosynthesis; L-histidine biosynthesis; L-histidine from 5-phospho-alpha-D-ribose 1-diphosphate: step 4/9. In Novosphingobium aromaticivorans (strain ATCC 700278 / DSM 12444 / CCUG 56034 / CIP 105152 / NBRC 16084 / F199), this protein is 1-(5-phosphoribosyl)-5-[(5-phosphoribosylamino)methylideneamino] imidazole-4-carboxamide isomerase.